The chain runs to 391 residues: Heme A synthase (391 aa).

8 helical membrane-spanning segments follow: residues 37-57, 121-141, 152-172, 186-206, 229-249, 298-318, 332-352, and 354-374; these read IRLW…VGGL, RQLG…FLAA, LLAL…MVAS, LATH…QALL, TTVL…VAGI, FLHR…WIFG, LLAM…LSAA, and WQVA…ILHA. Heme is bound at residue His300. His360 contributes to the heme binding site.

This sequence belongs to the COX15/CtaA family. Type 2 subfamily. Interacts with CtaB. Requires heme b as cofactor.

It is found in the cell membrane. The enzyme catalyses Fe(II)-heme o + 2 A + H2O = Fe(II)-heme a + 2 AH2. The protein operates within porphyrin-containing compound metabolism; heme A biosynthesis; heme A from heme O: step 1/1. Its function is as follows. Catalyzes the conversion of heme O to heme A by two successive hydroxylations of the methyl group at C8. The first hydroxylation forms heme I, the second hydroxylation results in an unstable dihydroxymethyl group, which spontaneously dehydrates, resulting in the formyl group of heme A. This Cereibacter sphaeroides (strain ATCC 17023 / DSM 158 / JCM 6121 / CCUG 31486 / LMG 2827 / NBRC 12203 / NCIMB 8253 / ATH 2.4.1.) (Rhodobacter sphaeroides) protein is Heme A synthase.